A 75-amino-acid chain; its full sequence is Exodeoxyribonuclease 7 small subunit (75 aa).

The protein belongs to the XseB family. Heterooligomer composed of large and small subunits.

It localises to the cytoplasm. The enzyme catalyses Exonucleolytic cleavage in either 5'- to 3'- or 3'- to 5'-direction to yield nucleoside 5'-phosphates.. Functionally, bidirectionally degrades single-stranded DNA into large acid-insoluble oligonucleotides, which are then degraded further into small acid-soluble oligonucleotides. This Geobacter sp. (strain M21) protein is Exodeoxyribonuclease 7 small subunit.